Here is a 175-residue protein sequence, read N- to C-terminus: ATP-dependent protease subunit HslV (175 aa).

Thr-2 is a catalytic residue. 3 residues coordinate Na(+): Gly-158, Cys-161, and Thr-164.

It belongs to the peptidase T1B family. HslV subfamily. As to quaternary structure, a double ring-shaped homohexamer of HslV is capped on each side by a ring-shaped HslU homohexamer. The assembly of the HslU/HslV complex is dependent on binding of ATP.

It is found in the cytoplasm. It carries out the reaction ATP-dependent cleavage of peptide bonds with broad specificity.. Its activity is regulated as follows. Allosterically activated by HslU binding. Protease subunit of a proteasome-like degradation complex believed to be a general protein degrading machinery. The sequence is that of ATP-dependent protease subunit HslV from Haemophilus influenzae (strain ATCC 51907 / DSM 11121 / KW20 / Rd).